A 975-amino-acid chain; its full sequence is Translation initiation factor IF-2 (975 aa).

Residues 48–63 (DHLRKSHGATDGDKRK) show a composition bias toward basic and acidic residues. Disordered regions lie at residues 48–84 (DHLR…GKAR) and 96–388 (FVKR…QAPT). Residues 104–115 (ETGADQAQAQTD) are compositionally biased toward low complexity. Over residues 120–177 (AELKRREEEARREAELLEKQAQELRERQERLEREEAERRAREEAAEAERRRAEEEAAA) the composition is skewed to basic and acidic residues. A compositionally biased stretch (low complexity) spans 178–211 (KRAAAAQAEAAQQAAAAREQAQRAQSEPAEQSAQ). A compositionally biased stretch (basic and acidic residues) spans 212–263 (DEARAAAERAAQREAAKKAEDAAREAADKARAEQEEIRKRREAAEAEARAIR). Positions 302–330 (KPAGEAAAARPAAKKPASGAPAPAAAPAG) are enriched in low complexity. Gly residues predominate over residues 359–372 (SSGGVDRGWRGGPK). The region spanning 475 to 644 (PRPPVVTVMG…LLQAEVLELK (170 aa)) is the tr-type G domain. The tract at residues 484-491 (GHVDHGKT) is G1. Position 484-491 (484-491 (GHVDHGKT)) interacts with GTP. A G2 region spans residues 509-513 (GITQH). The segment at 530-533 (DTPG) is G3. Residues 530–534 (DTPGH) and 584–587 (NKID) each bind GTP. Residues 584–587 (NKID) are G4. Residues 620-622 (SAK) are G5.

This sequence belongs to the TRAFAC class translation factor GTPase superfamily. Classic translation factor GTPase family. IF-2 subfamily.

Its subcellular location is the cytoplasm. In terms of biological role, one of the essential components for the initiation of protein synthesis. Protects formylmethionyl-tRNA from spontaneous hydrolysis and promotes its binding to the 30S ribosomal subunits. Also involved in the hydrolysis of GTP during the formation of the 70S ribosomal complex. The chain is Translation initiation factor IF-2 from Burkholderia pseudomallei (strain 1710b).